A 280-amino-acid chain; its full sequence is UPF0276 protein NGO_1946 (280 aa).

Belongs to the UPF0276 family.

This is UPF0276 protein NGO_1946 from Neisseria gonorrhoeae (strain ATCC 700825 / FA 1090).